A 304-amino-acid polypeptide reads, in one-letter code: m7GpppX diphosphatase (304 aa).

Residues Glu152, Lys174, and His235–His246 contribute to the substrate site. The Histidine triad motif motif lies at His242–His246. The active-site Nucleophile is the His244.

The protein belongs to the HIT family.

Its subcellular location is the cytoplasm. It is found in the nucleus. The catalysed reaction is a 5'-end (N(7)-methyl 5'-triphosphoguanosine)-ribonucleoside in mRNA + H2O = N(7)-methyl-GMP + a 5'-end diphospho-ribonucleoside in mRNA + 2 H(+). In terms of biological role, decapping scavenger enzyme that catalyzes the cleavage of a residual cap structure following the degradation of mRNAs by the 3'-&gt;5' exosome-mediated mRNA decay pathway. Hydrolyzes cap analog structures like 7-methylguanosine nucleoside triphosphate (m7GpppG) with up to 10 nucleotide substrates (small capped oligoribonucleotides) and specifically releases 5'-phosphorylated RNA fragments and 7-methylguanosine monophosphate (m7GMP). Has no activity towards mRNA molecules longer than 25 nucleotides. May also play a role in the 5'-&gt;3 mRNA decay pathway; m7GDP, the downstream product released by the 5'-&gt;3' mRNA mediated decapping activity, may be also converted by DCS1 to m7GMP. Inhibits mRNA translation. Binds to the m7GpppG cap analog. The sequence is that of m7GpppX diphosphatase (nhm1) from Schizosaccharomyces pombe (strain 972 / ATCC 24843) (Fission yeast).